The primary structure comprises 122 residues: Large ribosomal subunit protein uL18 (122 aa).

Residues 1–19 (MSTLSRKQKTQKRHKRLRR) show a composition bias toward basic residues. Positions 1–26 (MSTLSRKQKTQKRHKRLRRNLSGTDQ) are disordered.

Belongs to the universal ribosomal protein uL18 family. Part of the 50S ribosomal subunit; part of the 5S rRNA/L5/L18/L25 subcomplex. Contacts the 5S and 23S rRNAs.

This is one of the proteins that bind and probably mediate the attachment of the 5S RNA into the large ribosomal subunit, where it forms part of the central protuberance. The sequence is that of Large ribosomal subunit protein uL18 from Prochlorococcus marinus (strain SARG / CCMP1375 / SS120).